The sequence spans 251 residues: Putative ATP-binding protein Rv3427c in insertion sequence (251 aa).

108-115 is a binding site for ATP; that stretch reads GPVGVGKT.

This sequence belongs to the IS21/IS1162 putative ATP-binding protein family.

The polypeptide is Putative ATP-binding protein Rv3427c in insertion sequence (Mycobacterium tuberculosis (strain ATCC 25618 / H37Rv)).